A 1003-amino-acid polypeptide reads, in one-letter code: MSSQPLTLQDMMAAILRFWSEQGCIIHQGYDLEVGAGTFNPATFLQALGPEPFKTAYIEPSRRPQDGRYGQHPNRLQKYHQLQVILKPVPENFLSLYLESLKVIGLNLVDHDIRFVHDDWENPTIGAWGLGWEVWLNGMEITQLTYFQAVGSKPLEAISGEITYGVERIAMYLQKKNSVYDVMWNDSLTYGDITQHAEQAWSQYNFETANTSMWLKHFEDFAAEALATLDKGLPLPAYDFVIKASHAFNMLDSRGVISVTERTRYITKIRQLARAVADKYVIWRESLGFPLLKTIPSTPTVTAKQIPHICQDEDFLLEIGSEELPAAFVPTGIQQLESLAKKLLADHNISYNNLEVLGTPRRLALRIQGLSHLTIRPEAEKKGPPLSLLFEEDGSVSSQGEQFFASHGLSISHRSALDQSSTICRVRSIKGTDYLFLVIPEERIETAAILVNELPLLIRSMRFPKKMTWDNGGVEYARPIRWLVALYGDQVLPISLGFVSSGNISWGHRQLDNRQLTIPSSKEYIDILRDACVIVSQKERRSIIEQGLQNLTGDQTVAIAPEHLIEETVFLTEHPFVICAQFNPDFCSLPKELLIAEMINHQRYFPTQNLQGEITNRFLIVCDNSPTDTIIEGNEKALAPRLTDGNFLFKQDLLTSLDSFVEKLKSVTYFDALGSLADKTARLKLHLEETYPLLPLCPKEDIDTAVHYCKADLVSAVVNEFPELQGIMGRYYLQNAALSKAAAIAVGEHLQHITLGSSVSTTGALLSILDRVDNLLSCFILGLLPTSSHDPYALRRQSLELLTLLYTTQSSVDIEDLFSRLVRHFPTTIPNTVWSPEDVLNKLCSFVWGRLKTILSSLGFAKEVIAAVLTENCPKNPLTIINSARSIQELQNTQTLETIASTHNRLKKILASLSFSVTEQIFSLITSEDMLFKQALERFKEATTSLPISSREYLLQLEDLSQSTALFLDSVRIADDDENIRNQRIALLVATQKCFGFYAWDAL.

The interval 1–310 (MSSQPLTLQD…VTAKQIPHIC (310 aa)) is glycine--tRNA ligase alpha subunit. The tract at residues 311–1003 (QDEDFLLEIG…CFGFYAWDAL (693 aa)) is glycine--tRNA ligase beta subunit.

The protein belongs to the class-II aminoacyl-tRNA synthetase family.

It is found in the cytoplasm. The catalysed reaction is tRNA(Gly) + glycine + ATP = glycyl-tRNA(Gly) + AMP + diphosphate. The protein is Glycine--tRNA ligase (glyQS) of Chlamydia muridarum (strain MoPn / Nigg).